A 1610-amino-acid polypeptide reads, in one-letter code: Protein TASOR (1610 aa).

The segment at 1-96 (MATAAETEAP…PERPFRRSFQ (96 aa)) is disordered. A2 carries the post-translational modification N-acetylalanine. The span at 41–51 (NGGGDGGGGAG) shows a compositional bias: gly residues. Residues 52-61 (PEETAAAEAA) are compositionally biased toward low complexity. The residue at position 339 (S339) is a Phosphoserine. K581 participates in a covalent cross-link: Glycyl lysine isopeptide (Lys-Gly) (interchain with G-Cter in SUMO2). Phosphoserine occurs at positions 628, 631, and 668. Disordered stretches follow at residues 631 to 671 (SDYE…SLDY) and 687 to 710 (KKNVGGDPDPEDTKSKNVLKRKLE). 2 stretches are compositionally biased toward basic and acidic residues: residues 652–671 (NSRDETTEPEQQKSSHSLDY) and 697–710 (EDTKSKNVLKRKLE). Position 793 is a phosphoserine (S793). Residues K816 and K825 each participate in a glycyl lysine isopeptide (Lys-Gly) (interchain with G-Cter in SUMO2) cross-link. S836 is subject to Phosphoserine. K866 is covalently cross-linked (Glycyl lysine isopeptide (Lys-Gly) (interchain with G-Cter in SUMO2)). The segment at 915 to 941 (TGGNAGSPEDQHGKHGEKQTPDTLKGT) is disordered. S921 and K928 each carry phosphoserine. The segment covering 923 to 934 (EDQHGKHGEKQT) has biased composition (basic and acidic residues). T1004 carries the phosphothreonine modification. Phosphoserine is present on residues S1059 and S1508.

It belongs to the TASOR family. In terms of assembly, component of the HUSH complex; at least composed of TASOR, PPHLN1 and MPHOSPH8. Interacts with MORC2; the interaction associateS MORC2 with the HUSH complex which recruits MORC2 to heterochromatic loci. Interacts with ZNF638; leading to recruitment of the HUSH complex to unintegrated retroviral DNA. Interacts with INPP5A, EML1, SV1L, GPSM2, ITGB3BP, CNTN1, ETFA, PSMD8, S100A10, MPHOSPH8, TMEM100, ALB, PARPBP, HCFC2, NCBP1 and SETDB1. In terms of tissue distribution, present in skin, brain and testis (at protein level). Ubiquitously expressed at low levels in the majority of the organs, expressed at higher levels in kidneys, spleen, thymus, seminal vesicles, uterus, and ovaries and its expression is almost six times higher in male tissues than in females. Highly expressed in seminiferous tubules with a strong signal in Sertoli cells, spermatogonia, and spermatocytes.

Its subcellular location is the nucleus. The protein resides in the chromosome. Component of the HUSH complex, a multiprotein complex that mediates epigenetic repression. The HUSH complex is recruited to genomic loci rich in H3K9me3 and is required to maintain transcriptional silencing by promoting recruitment of SETDB1, a histone methyltransferase that mediates further deposition of H3K9me3, as well as MORC2. Also represses L1 retrotransposons in collaboration with MORC2 and, probably, SETDB1, the silencing is dependent of repressive epigenetic modifications, such as H3K9me3 mark. Silencing events often occur within introns of transcriptionally active genes, and lead to the down-regulation of host gene expression. The HUSH complex is also involved in the silencing of unintegrated retroviral DNA by being recruited by ZNF638: some part of the retroviral DNA formed immediately after infection remains unintegrated in the host genome and is transcriptionally repressed. Plays a crucial role in early embryonic development. Involved in the organization of spindle poles and spindle apparatus assembly during zygotic division. Plays an important role in maintaining epiblast fitness or potency. This is Protein TASOR from Mus musculus (Mouse).